Here is a 444-residue protein sequence, read N- to C-terminus: ATP-dependent protease ATPase subunit HslU (444 aa).

Residues isoleucine 18 and 60–65 (GVGKTE) each bind ATP. The segment at 143–163 (WGEVESHDSHSSTRQAFRKKL) is disordered. Positions 257, 322, and 394 each coordinate ATP.

This sequence belongs to the ClpX chaperone family. HslU subfamily. A double ring-shaped homohexamer of HslV is capped on each side by a ring-shaped HslU homohexamer. The assembly of the HslU/HslV complex is dependent on binding of ATP.

Its subcellular location is the cytoplasm. Functionally, ATPase subunit of a proteasome-like degradation complex; this subunit has chaperone activity. The binding of ATP and its subsequent hydrolysis by HslU are essential for unfolding of protein substrates subsequently hydrolyzed by HslV. HslU recognizes the N-terminal part of its protein substrates and unfolds these before they are guided to HslV for hydrolysis. This chain is ATP-dependent protease ATPase subunit HslU, found in Haemophilus influenzae (strain PittEE).